Reading from the N-terminus, the 251-residue chain is Pyridoxine 5'-phosphate synthase (251 aa).

A 3-amino-2-oxopropyl phosphate-binding site is contributed by Asn-7. A 1-deoxy-D-xylulose 5-phosphate-binding site is contributed by Asp-9–His-10. Position 18 (Arg-18) interacts with 3-amino-2-oxopropyl phosphate. His-43 (proton acceptor) is an active-site residue. Residues Arg-45 and His-50 each coordinate 1-deoxy-D-xylulose 5-phosphate. Glu-70 serves as the catalytic Proton acceptor. Thr-100 is a binding site for 1-deoxy-D-xylulose 5-phosphate. His-198 (proton donor) is an active-site residue. 3-amino-2-oxopropyl phosphate contacts are provided by residues Ala-199 and Gly-220–His-221.

The protein belongs to the PNP synthase family. As to quaternary structure, homooctamer; tetramer of dimers.

Its subcellular location is the cytoplasm. The enzyme catalyses 3-amino-2-oxopropyl phosphate + 1-deoxy-D-xylulose 5-phosphate = pyridoxine 5'-phosphate + phosphate + 2 H2O + H(+). It functions in the pathway cofactor biosynthesis; pyridoxine 5'-phosphate biosynthesis; pyridoxine 5'-phosphate from D-erythrose 4-phosphate: step 5/5. Functionally, catalyzes the complicated ring closure reaction between the two acyclic compounds 1-deoxy-D-xylulose-5-phosphate (DXP) and 3-amino-2-oxopropyl phosphate (1-amino-acetone-3-phosphate or AAP) to form pyridoxine 5'-phosphate (PNP) and inorganic phosphate. The polypeptide is Pyridoxine 5'-phosphate synthase (Dechloromonas aromatica (strain RCB)).